The following is a 326-amino-acid chain: Ketol-acid reductoisomerase (NADP(+)) (326 aa).

The KARI N-terminal Rossmann domain occupies 1 to 180 (MDIIHDNAAD…GLTRGGVLEC (180 aa)). NADP(+) is bound by residues 24-27 (YGAQ), R47, and S51. H106 is a catalytic residue. G132 serves as a coordination point for NADP(+). A KARI C-terminal knotted domain is found at 181–326 (TMAQETYEDL…AKIRSLFERN (146 aa)). Positions 189, 193, 225, and 229 each coordinate Mg(2+). Substrate is bound at residue S250.

The protein belongs to the ketol-acid reductoisomerase family. It depends on Mg(2+) as a cofactor.

It catalyses the reaction (2R)-2,3-dihydroxy-3-methylbutanoate + NADP(+) = (2S)-2-acetolactate + NADPH + H(+). The enzyme catalyses (2R,3R)-2,3-dihydroxy-3-methylpentanoate + NADP(+) = (S)-2-ethyl-2-hydroxy-3-oxobutanoate + NADPH + H(+). It participates in amino-acid biosynthesis; L-isoleucine biosynthesis; L-isoleucine from 2-oxobutanoate: step 2/4. It functions in the pathway amino-acid biosynthesis; L-valine biosynthesis; L-valine from pyruvate: step 2/4. Functionally, involved in the biosynthesis of branched-chain amino acids (BCAA). Catalyzes an alkyl-migration followed by a ketol-acid reduction of (S)-2-acetolactate (S2AL) to yield (R)-2,3-dihydroxy-isovalerate. In the isomerase reaction, S2AL is rearranged via a Mg-dependent methyl migration to produce 3-hydroxy-3-methyl-2-ketobutyrate (HMKB). In the reductase reaction, this 2-ketoacid undergoes a metal-dependent reduction by NADPH to yield (R)-2,3-dihydroxy-isovalerate. In Akkermansia muciniphila (strain ATCC BAA-835 / DSM 22959 / JCM 33894 / BCRC 81048 / CCUG 64013 / CIP 107961 / Muc), this protein is Ketol-acid reductoisomerase (NADP(+)).